The following is a 260-amino-acid chain: 5-oxoprolinase subunit A (260 aa).

The protein belongs to the LamB/PxpA family. As to quaternary structure, forms a complex composed of PxpA, PxpB and PxpC.

The catalysed reaction is 5-oxo-L-proline + ATP + 2 H2O = L-glutamate + ADP + phosphate + H(+). Its function is as follows. Catalyzes the cleavage of 5-oxoproline to form L-glutamate coupled to the hydrolysis of ATP to ADP and inorganic phosphate. The protein is 5-oxoprolinase subunit A of Methylococcus capsulatus (strain ATCC 33009 / NCIMB 11132 / Bath).